Reading from the N-terminus, the 229-residue chain is Flagellar L-ring protein 1 (229 aa).

An N-terminal signal peptide occupies residues 1–18 (MYLRKISAPLMTMLLLNG). A lipid anchor (N-palmitoyl cysteine) is attached at Cys-19. Cys-19 carries S-diacylglycerol cysteine lipidation.

Belongs to the FlgH family. As to quaternary structure, the basal body constitutes a major portion of the flagellar organelle and consists of four rings (L,P,S, and M) mounted on a central rod.

The protein localises to the cell outer membrane. It localises to the bacterial flagellum basal body. Functionally, assembles around the rod to form the L-ring and probably protects the motor/basal body from shearing forces during rotation. In Yersinia pseudotuberculosis serotype I (strain IP32953), this protein is Flagellar L-ring protein 1 (flgH1).